The primary structure comprises 255 residues: Ribonuclease HII (255 aa).

Positions R58–Y247 constitute an RNase H type-2 domain. A divalent metal cation contacts are provided by D64, E65, and D156.

The protein belongs to the RNase HII family. The cofactor is Mn(2+). Requires Mg(2+) as cofactor.

The protein localises to the cytoplasm. It carries out the reaction Endonucleolytic cleavage to 5'-phosphomonoester.. Its function is as follows. Endonuclease that specifically degrades the RNA of RNA-DNA hybrids. The sequence is that of Ribonuclease HII from Syntrophomonas wolfei subsp. wolfei (strain DSM 2245B / Goettingen).